The primary structure comprises 356 residues: Protein MGF 360-10L (356 aa).

One copy of the ANK repeat lies at 57-89; sequence DLNTALMLATKENNYQLIKMFTDWGADINYGLI. N172 is a glycosylation site (N-linked (GlcNAc...) asparagine; by host). A helical transmembrane segment spans residues 249–271; the sequence is NFLTIYYCFILGANINLAMIASI. Residues N352 and N353 are each glycosylated (N-linked (GlcNAc...) asparagine; by host).

Belongs to the asfivirus MGF 360 family.

The protein localises to the host membrane. In terms of biological role, plays a role in virus cell tropism, and may be required for efficient virus replication in macrophages. This is Protein MGF 360-10L from African swine fever virus (isolate Tick/South Africa/Pretoriuskop Pr4/1996) (ASFV).